Reading from the N-terminus, the 338-residue chain is tRNA-specific 2-thiouridylase MnmA (338 aa).

ATP contacts are provided by residues 6 to 13 (AMSGGVDS) and methionine 32. The active-site Nucleophile is the cysteine 92. An intrachain disulfide couples cysteine 92 to cysteine 186. ATP is bound at residue glycine 116. Positions 134-136 (KDQ) are interaction with tRNA. Cysteine 186 acts as the Cysteine persulfide intermediate in catalysis. The interaction with tRNA stretch occupies residues 288 to 289 (RY).

It belongs to the MnmA/TRMU family.

It is found in the cytoplasm. The enzyme catalyses S-sulfanyl-L-cysteinyl-[protein] + uridine(34) in tRNA + AH2 + ATP = 2-thiouridine(34) in tRNA + L-cysteinyl-[protein] + A + AMP + diphosphate + H(+). In terms of biological role, catalyzes the 2-thiolation of uridine at the wobble position (U34) of tRNA, leading to the formation of s(2)U34. The sequence is that of tRNA-specific 2-thiouridylase MnmA from Campylobacter jejuni subsp. jejuni serotype O:6 (strain 81116 / NCTC 11828).